Here is a 370-residue protein sequence, read N- to C-terminus: 1-propanol dehydrogenase PduQ (370 aa).

It belongs to the iron-containing alcohol dehydrogenase family. As to quaternary structure, interacts with PduP, probably via the N-terminus of PduQ. Fe cation is required as a cofactor.

The protein resides in the bacterial microcompartment. The enzyme catalyses 1-propanol + NAD(+) = propanal + NADH + H(+). It functions in the pathway polyol metabolism; 1,2-propanediol degradation. An iron-dependent alcohol dehydrogenase required for optimal 1,2-propanediol (1,2-PD) degradation. NAD(+) and NADH are regenerated internally within the bacterial microcompartment (BMC) dedicated to 1,2-PD degradation by the PduP and PduQ enzymes, which reduce NAD(+) and oxidize NADH respectively, although there must also be cofactor transport across the BMC. Its function is as follows. Expression of a cosmid containing the full 21-gene pdu operon in E.coli allows E.coli to grow on 1,2-propanediol (1,2-PD) with the appearance of bacterial microcompartments (BMC) in its cytoplasm. In terms of biological role, the 1,2-PD-specific bacterial microcompartment (BMC) concentrates low levels of 1,2-PD catabolic enzymes, concentrates volatile reaction intermediates thus enhancing pathway flux and keeps the level of toxic, mutagenic propionaldehyde low. This chain is 1-propanol dehydrogenase PduQ, found in Citrobacter freundii.